Reading from the N-terminus, the 307-residue chain is Acetaldehyde dehydrogenase (307 aa).

12 to 15 provides a ligand contact to NAD(+); the sequence is SGNI. Residue Cys130 is the Acyl-thioester intermediate of the active site. NAD(+)-binding positions include 161–169 and Asn272; that span reads SVGPGTRQN.

The protein belongs to the acetaldehyde dehydrogenase family.

The catalysed reaction is acetaldehyde + NAD(+) + CoA = acetyl-CoA + NADH + H(+). This Shewanella pealeana (strain ATCC 700345 / ANG-SQ1) protein is Acetaldehyde dehydrogenase.